The following is a 340-amino-acid chain: NADH-quinone oxidoreductase subunit H (340 aa).

The next 8 helical transmembrane spans lie at 4-24 (TIGI…PLLI), 78-98 (YLFV…WAVI), 113-133 (VLYL…AGWA), 151-171 (VSYE…AGSM), 184-204 (MLHW…ISGI), 244-264 (SMIL…LSPF), 273-293 (IFFI…FLFV), and 316-336 (VLIP…VAHV).

It belongs to the complex I subunit 1 family. In terms of assembly, NDH-1 is composed of 14 different subunits. Subunits NuoA, H, J, K, L, M, N constitute the membrane sector of the complex.

The protein resides in the cell inner membrane. The catalysed reaction is a quinone + NADH + 5 H(+)(in) = a quinol + NAD(+) + 4 H(+)(out). In terms of biological role, NDH-1 shuttles electrons from NADH, via FMN and iron-sulfur (Fe-S) centers, to quinones in the respiratory chain. The immediate electron acceptor for the enzyme in this species is believed to be ubiquinone. Couples the redox reaction to proton translocation (for every two electrons transferred, four hydrogen ions are translocated across the cytoplasmic membrane), and thus conserves the redox energy in a proton gradient. This subunit may bind ubiquinone. The sequence is that of NADH-quinone oxidoreductase subunit H from Legionella pneumophila (strain Lens).